Here is a 459-residue protein sequence, read N- to C-terminus: UDP-N-acetylmuramate--L-alanine ligase (459 aa).

118–124 (GTHGKTT) serves as a coordination point for ATP.

This sequence belongs to the MurCDEF family.

It localises to the cytoplasm. The enzyme catalyses UDP-N-acetyl-alpha-D-muramate + L-alanine + ATP = UDP-N-acetyl-alpha-D-muramoyl-L-alanine + ADP + phosphate + H(+). Its pathway is cell wall biogenesis; peptidoglycan biosynthesis. Its function is as follows. Cell wall formation. The protein is UDP-N-acetylmuramate--L-alanine ligase of Lachnospira eligens (strain ATCC 27750 / DSM 3376 / VPI C15-48 / C15-B4) (Eubacterium eligens).